The sequence spans 96 residues: Co-chaperonin GroES (96 aa).

It belongs to the GroES chaperonin family. Heptamer of 7 subunits arranged in a ring. Interacts with the chaperonin GroEL.

The protein resides in the cytoplasm. Together with the chaperonin GroEL, plays an essential role in assisting protein folding. The GroEL-GroES system forms a nano-cage that allows encapsulation of the non-native substrate proteins and provides a physical environment optimized to promote and accelerate protein folding. GroES binds to the apical surface of the GroEL ring, thereby capping the opening of the GroEL channel. The protein is Co-chaperonin GroES of Albidiferax ferrireducens (strain ATCC BAA-621 / DSM 15236 / T118) (Rhodoferax ferrireducens).